Here is a 950-residue protein sequence, read N- to C-terminus: Oxysterol-binding protein-related protein 1 (950 aa).

The tract at residues 1–237 (MNTEAEQQLL…NKVIYKALKR (237 aa)) is interaction with RAB7A. 3 ANK repeats span residues 47–76 (LGWT…EVNV), 80–109 (MGDT…DTTI), and 175–204 (LGNT…DPNL). The region spanning 235–334 (LKRYEGPLWK…WLEAIEEHSA (100 aa)) is the PH domain. A coiled-coil region spans residues 430-463 (NFKLEQEQEKNKILSEALETLATEHHELEQSLVK). Residues 469-485 (SILSEDEFYDALSDSES) carry the FFAT motif. Ser-499 carries the phosphoserine modification. Residues 501–521 (EEEGEHLGSRKHRMSEEKDCG) are compositionally biased toward basic and acidic residues. 3 disordered regions span residues 501 to 527 (EEEG…DALS), 795 to 816 (KKNT…LDEM), and 881 to 913 (MENG…SEED). Residues 877–913 (DIRAMENGEIDQASEEKKRLEEKQRAARKNRSKSEED) are a coiled coil. The span at 890-901 (SEEKKRLEEKQR) shows a compositional bias: basic and acidic residues.

The protein belongs to the OSBP family. In terms of assembly, interacts (via FFAT motif) with VAPA and VAPB. Interacts with the GTP-bound form of RAB7A. Interacts with OAS1B. Interacts (via FFAT motif) with MOSPD2 (via MSP domain).

The protein resides in the late endosome. Binds phospholipids; exhibits strong binding to phosphatidic acid and weak binding to phosphatidylinositol 3-phosphate. Stabilizes GTP-bound RAB7A on late endosomes/lysosomes and alters functional properties of late endocytic compartments via its interaction with RAB7A. Binds 25-hydroxycholesterol and cholesterol. This chain is Oxysterol-binding protein-related protein 1, found in Homo sapiens (Human).